A 56-amino-acid polypeptide reads, in one-letter code: Alpha-conotoxin EpI (56 aa).

Residues 1 to 16 (MFTVFLLVVLATTVVS) form the signal peptide. Positions 17–39 (FTSDRASDSRKDAASGLIALTIK) are excised as a propeptide. 2 disulfides stabilise this stretch: Cys41/Cys47 and Cys42/Cys55. The segment at 43–45 (SDP) is ser-Xaa-Pro motif, crucial for potent interaction with nAChR. Tyr54 is subject to Sulfotyrosine. The residue at position 55 (Cys55) is a Cysteine amide.

Belongs to the conotoxin A superfamily. Post-translationally, both tyrosine sulfation and C-terminal amidation are important for activity and structure stability. Expressed by the venom duct.

Its subcellular location is the secreted. Its function is as follows. Alpha-conotoxins act on postsynaptic membranes, they bind to the nicotinic acetylcholine receptors (nAChR) and thus inhibit them. This native peptide blocks mammalian nicotinic acetylcholine receptors composed of alpha-3-beta-2/CHRNA3-CHRNB2 and alpha-3-beta-4/CHRNA3-CHRNB4 subunits. The polypeptide is Alpha-conotoxin EpI (Conus episcopatus (Bishop's cone)).